The chain runs to 394 residues: General receptor for phosphoinositides 1-associated scaffold protein (394 aa).

The interval 1 to 51 (MTLRRLRKLQQKEEATAAPDLAGRAPDSEAARAAPTPSGPPAAAAPPGAPG) is disordered. Residues 37–49 (PSGPPAAAAPPGA) show a composition bias toward pro residues. Residue Thr-76 is modified to Phosphothreonine. Residue Ser-93 is modified to Phosphoserine. The region spanning 100 to 189 (VLTLEKGDNQ…VLRLETLYGT (90 aa)) is the PDZ domain. Residues 180–257 (VLRLETLYGT…GAGLLPGSLP (78 aa)) are interaction with PSCD3. Tyr-236 is subject to Phosphotyrosine. The residue at position 269 (Arg-269) is an Omega-N-methylarginine. The interval 293–318 (EPQALPPPPPPARAPGPGSAETPASV) is disordered. Residues 296-306 (ALPPPPPPARA) show a composition bias toward pro residues. The residue at position 386 (Ser-386) is a Phosphoserine.

As to quaternary structure, heteromer. Composed of TAMALIN, CYTH2 and at least one GRM1. Also interacts with CYTH3, GRM2, GRM3 and GRM5. In terms of tissue distribution, expressed in brain.

Its subcellular location is the cytoplasm. It is found in the perinuclear region. It localises to the cell membrane. The protein resides in the postsynaptic cell membrane. Functionally, plays a role in intracellular trafficking and contributes to the macromolecular organization of group 1 metabotropic glutamate receptors (mGluRs) at synapses. The protein is General receptor for phosphoinositides 1-associated scaffold protein of Rattus norvegicus (Rat).